The chain runs to 284 residues: Methylglyoxal reductase YeaE (284 aa).

This sequence belongs to the aldo/keto reductase family.

It carries out the reaction hydroxyacetone + NADP(+) = methylglyoxal + NADPH + H(+). The enzyme catalyses a primary alcohol + NADP(+) = an aldehyde + NADPH + H(+). In terms of biological role, aldo-keto reductase that contributes to cellular methylglyoxal detoxification by catalyzing the NADPH-dependent conversion of methylglyoxal to acetol. It also exhibits activity with glyoxal and probably plays a significant role in detoxification of glyoxal in vivo. Can also use aromatic aldehydes such as 4-nitrobenzaldehyde, 3-nitrobenzaldehyde and benzaldehyde, and phenylglyoxal. This chain is Methylglyoxal reductase YeaE (yeaE), found in Escherichia coli (strain K12).